The chain runs to 65 residues: Protein translocase subunit SecE (65 aa).

The Cytoplasmic portion of the chain corresponds to 1–34 (MEKLRKFFREVIAEAKKISWPSRKELLTSFGVVL). The chain crosses the membrane as a helical span at residues 35-51 (VILAVTSVYFFVLDFIF). Topologically, residues 52–65 (SGVVSAIFKALGIG) are extracellular.

Belongs to the SecE/SEC61-gamma family. Component of the Sec protein translocase complex. Heterotrimer consisting of SecY, SecE and SecG subunits. The heterotrimers can form oligomers, although 1 heterotrimer is thought to be able to translocate proteins. Interacts with SecDF, and other proteins may be involved. The channel interacts with SecA via subunit SecY.

It localises to the cell inner membrane. In terms of biological role, essential subunit of the protein translocation channel SecYEG. Clamps together the 2 halves of SecY. May contact the channel plug during translocation. The protein is Protein translocase subunit SecE of Thermotoga maritima (strain ATCC 43589 / DSM 3109 / JCM 10099 / NBRC 100826 / MSB8).